The primary structure comprises 598 residues: Arginine--tRNA ligase (598 aa).

A 'HIGH' region motif is present at residues 139–149; the sequence is ANPTGPMHVGH.

It belongs to the class-I aminoacyl-tRNA synthetase family. Monomer.

The protein resides in the cytoplasm. It catalyses the reaction tRNA(Arg) + L-arginine + ATP = L-arginyl-tRNA(Arg) + AMP + diphosphate. This Bradyrhizobium sp. (strain BTAi1 / ATCC BAA-1182) protein is Arginine--tRNA ligase.